Consider the following 89-residue polypeptide: MSLSTEAKAKILADFGRCENDSGSTEVQVALLTAQINHLQGHFKTHIHDHHSRRGLLRMVSARRKLTAYLKRTDNARYTALIQKLGLRR.

The protein belongs to the universal ribosomal protein uS15 family. Part of the 30S ribosomal subunit. Forms a bridge to the 50S subunit in the 70S ribosome, contacting the 23S rRNA.

One of the primary rRNA binding proteins, it binds directly to 16S rRNA where it helps nucleate assembly of the platform of the 30S subunit by binding and bridging several RNA helices of the 16S rRNA. Functionally, forms an intersubunit bridge (bridge B4) with the 23S rRNA of the 50S subunit in the ribosome. This chain is Small ribosomal subunit protein uS15, found in Shewanella denitrificans (strain OS217 / ATCC BAA-1090 / DSM 15013).